We begin with the raw amino-acid sequence, 228 residues long: Heptaprenylglyceryl phosphate synthase (228 aa).

Residue Lys-12 coordinates sn-glycerol 1-phosphate. Mg(2+)-binding residues include Asp-14 and Thr-40. Sn-glycerol 1-phosphate is bound by residues Tyr-159–Gly-164, Gly-189, and Gly-209–Asn-210.

This sequence belongs to the GGGP/HepGP synthase family. Group I subfamily. In terms of assembly, homodimer. Mg(2+) serves as cofactor.

The enzyme catalyses sn-glycerol 1-phosphate + all-trans-heptaprenyl diphosphate = 3-heptaprenyl-sn-glycero-1-phosphate + diphosphate. The protein operates within membrane lipid metabolism; glycerophospholipid metabolism. Its function is as follows. Prenyltransferase that catalyzes in vivo the transfer of the heptaprenyl moiety of heptaprenyl pyrophosphate (HepPP; 35 carbon atoms) to the C3 hydroxyl of sn-glycerol-1-phosphate (G1P), producing heptaprenylglyceryl phosphate (HepGP). This reaction is an ether-bond-formation step in the biosynthesis of archaea-type G1P-based membrane lipids found in Bacillales. The protein is Heptaprenylglyceryl phosphate synthase of Geobacillus sp. (strain WCH70).